We begin with the raw amino-acid sequence, 82 residues long: UPF0213 protein SSP2268 (82 aa).

The GIY-YIG domain maps to 2–77; the sequence is DKHYIYIVKC…KTFSRQKKLK (76 aa).

The protein belongs to the UPF0213 family.

The sequence is that of UPF0213 protein SSP2268 from Staphylococcus saprophyticus subsp. saprophyticus (strain ATCC 15305 / DSM 20229 / NCIMB 8711 / NCTC 7292 / S-41).